We begin with the raw amino-acid sequence, 874 residues long: Probable inorganic carbon transporter subunit DabA (874 aa).

Cys-398, Asp-400, His-580, and Cys-595 together coordinate Zn(2+).

It belongs to the inorganic carbon transporter (TC 9.A.2) DabA family. In terms of assembly, forms a complex with DabB. It depends on Zn(2+) as a cofactor.

It is found in the cell membrane. Functionally, part of an energy-coupled inorganic carbon pump. This Bacillus anthracis (strain A0248) protein is Probable inorganic carbon transporter subunit DabA.